Here is a 519-residue protein sequence, read N- to C-terminus: Pleckstrin homology domain-containing family A member 8 (519 aa).

A PH domain is found at Met-1–Ala-93. Thr-139 carries the post-translational modification Phosphothreonine. The residue at position 145 (Ser-145) is a Phosphoserine. Thr-153 is subject to Phosphothreonine. Residues Thr-310–Val-519 are glycolipid transfer protein homology domain.

As to quaternary structure, homodimer. Interacts with ARF1; the interaction together with phosphatidylinositol 4-phosphate binding is required for FAPP2 GlcCer transfer ability. In terms of tissue distribution, expressed in kidney cell lines.

The protein resides in the golgi apparatus. Its subcellular location is the trans-Golgi network membrane. It localises to the membrane. Its function is as follows. Cargo transport protein that is required for apical transport from the Golgi complex. Transports AQP2 from the trans-Golgi network (TGN) to sites of AQP2 phosphorylation. Mediates the non-vesicular transport of glucosylceramide (GlcCer) from the trans-Golgi network (TGN) to the plasma membrane and plays a pivotal role in the synthesis of complex glycosphingolipids. Binding of both phosphatidylinositol 4-phosphate (PIP) and ARF1 are essential for the GlcCer transfer ability. Also required for primary cilium formation, possibly by being involved in the transport of raft lipids to the apical membrane, and for membrane tubulation. The sequence is that of Pleckstrin homology domain-containing family A member 8 (PLEKHA8) from Homo sapiens (Human).